Here is a 548-residue protein sequence, read N- to C-terminus: MAELTISASDIEGAIEDYVSSFTADSGREEIGVVIDAGDGIAHVEGLPSVMTQELLEFPGGVLGVALNLDEHSVGAVILGEFEKIEQGQQVKRTGEVLSVPVGDAFLGRVINPLGQPIDGQGDIEAEGRRALELQAPSVVQRQGVSEPLQTGIKAIDSMTPIGRGQRQLIIGDRKTGKTAVCVDTILNQREAWATGDPKQQVRCVYVAIGQKGTTIASVKRALEEGGAMECTTIVAAPASDAAGFKWLAPYTGSAIGQHWMYDGKHVLIVFDDLSKQADAYRAISLLLRRPPGREAFPGDVFYLHSRLLERCAKLSDELGGGSMTGLPIIETKANDISAFIPTNVISITDGQCFLESDLFNQGVRPAINVGVSVSRVGGAAQIKAMKEVAGSLRLELSQYRELEAFAAFASDLDAASKAQLDRGARLVELLKQPQYTPYPVEDQVVAIYLGTGGHLDSVPVEDVARFESELLEHVKASHGDILAGIRESKKLSEEAEQKLANVINEFKKGFSASDGSSVVVNEAEAEAMDEADVEKESVKVRKPAPKK.

An ATP-binding site is contributed by 172–179; that stretch reads GDRKTGKT. A disordered region spans residues 526 to 548; sequence AEAMDEADVEKESVKVRKPAPKK.

It belongs to the ATPase alpha/beta chains family. F-type ATPases have 2 components, CF(1) - the catalytic core - and CF(0) - the membrane proton channel. CF(1) has five subunits: alpha(3), beta(3), gamma(1), delta(1), epsilon(1). CF(0) has three main subunits: a(1), b(2) and c(9-12). The alpha and beta chains form an alternating ring which encloses part of the gamma chain. CF(1) is attached to CF(0) by a central stalk formed by the gamma and epsilon chains, while a peripheral stalk is formed by the delta and b chains.

The protein resides in the cell membrane. It carries out the reaction ATP + H2O + 4 H(+)(in) = ADP + phosphate + 5 H(+)(out). In terms of biological role, produces ATP from ADP in the presence of a proton gradient across the membrane. The alpha chain is a regulatory subunit. The protein is ATP synthase subunit alpha of Mycolicibacterium vanbaalenii (strain DSM 7251 / JCM 13017 / BCRC 16820 / KCTC 9966 / NRRL B-24157 / PYR-1) (Mycobacterium vanbaalenii).